The chain runs to 306 residues: Putative type I specificity subunit S.MpnORF285P (306 aa).

Belongs to the type-I restriction system S methylase family. As to quaternary structure, the methyltransferase is composed of M and S polypeptides.

Functionally, the specificity (S) subunit of a type I methyltransferase (MTase); this subunit dictates DNA sequence specificity. The single R subunit has multiple frameshifts and is probably not expressed. The chain is Putative type I specificity subunit S.MpnORF285P from Mycoplasma pneumoniae (strain ATCC 29342 / M129 / Subtype 1) (Mycoplasmoides pneumoniae).